Consider the following 363-residue polypeptide: Fructose-bisphosphate aldolase (363 aa).

Residues R56 and K147 each coordinate substrate. The active-site Proton acceptor is the E188. Residue K230 is the Schiff-base intermediate with dihydroxyacetone-P of the active site.

Belongs to the class I fructose-bisphosphate aldolase family.

The catalysed reaction is beta-D-fructose 1,6-bisphosphate = D-glyceraldehyde 3-phosphate + dihydroxyacetone phosphate. Its pathway is carbohydrate degradation; glycolysis; D-glyceraldehyde 3-phosphate and glycerone phosphate from D-glucose: step 4/4. The chain is Fructose-bisphosphate aldolase from Schistosoma mansoni (Blood fluke).